The following is a 295-amino-acid chain: Protease HtpX (295 aa).

2 helical membrane passes run 4 to 24 and 42 to 62; these read ILLFLATNLAVVLIASITLSL and QLLVFCAVFGFAGSLFSLFIS. Histidine 147 lines the Zn(2+) pocket. Glutamate 148 is an active-site residue. Residue histidine 151 coordinates Zn(2+). Helical transmembrane passes span 158–178 and 199–219; these read VTLALVQGVVNTFVMFFARII and ITTIFAELVLGFLASAIVMWF. Position 224 (glutamate 224) interacts with Zn(2+).

This sequence belongs to the peptidase M48B family. The cofactor is Zn(2+).

Its subcellular location is the cell inner membrane. This is Protease HtpX from Pseudomonas syringae pv. tomato (strain ATCC BAA-871 / DC3000).